The sequence spans 125 residues: Calcitonin gene-related peptide 1 (125 aa).

The first 25 residues, 1–25 (MVMLKISSFLAVYALVVCQMDSFQA), serve as a signal peptide directing secretion. Residues 26 to 77 (APVRPGLESITDRVTLSDYEARRLLNALVKDFIQMTAEELEQASEGNSVTAQ) constitute a propeptide that is removed on maturation. C81 and C86 are disulfide-bonded. F116 carries the post-translational modification Phenylalanine amide. The propeptide occupies 122 to 125 (SVQI).

This sequence belongs to the calcitonin family.

It localises to the secreted. CGRP1/CALCA is a peptide hormone that induces vasodilation mediated by the CALCRL-RAMP1 receptor complex. Dilates a variety of vessels including the coronary, cerebral and systemic vasculature. Its abundance in the CNS also points toward a neurotransmitter or neuromodulator role. It also elevates platelet cAMP. CGRP1 can also bind and activate CALCR-RAMP1 (AMYR1) receptor complex. The sequence is that of Calcitonin gene-related peptide 1 (CALCA) from Gallus gallus (Chicken).